Consider the following 240-residue polypeptide: UDP-2,3-diacylglucosamine hydrolase (240 aa).

Mn(2+) is bound by residues D8, H10, D41, N79, and H114. Residue 79–80 (NR) coordinates substrate. Positions 122, 160, 164, 167, and 195 each coordinate substrate. 2 residues coordinate Mn(2+): H195 and H197.

It belongs to the LpxH family. Requires Mn(2+) as cofactor.

It is found in the cell inner membrane. The enzyme catalyses UDP-2-N,3-O-bis[(3R)-3-hydroxytetradecanoyl]-alpha-D-glucosamine + H2O = 2-N,3-O-bis[(3R)-3-hydroxytetradecanoyl]-alpha-D-glucosaminyl 1-phosphate + UMP + 2 H(+). The protein operates within glycolipid biosynthesis; lipid IV(A) biosynthesis; lipid IV(A) from (3R)-3-hydroxytetradecanoyl-[acyl-carrier-protein] and UDP-N-acetyl-alpha-D-glucosamine: step 4/6. In terms of biological role, hydrolyzes the pyrophosphate bond of UDP-2,3-diacylglucosamine to yield 2,3-diacylglucosamine 1-phosphate (lipid X) and UMP by catalyzing the attack of water at the alpha-P atom. Involved in the biosynthesis of lipid A, a phosphorylated glycolipid that anchors the lipopolysaccharide to the outer membrane of the cell. The sequence is that of UDP-2,3-diacylglucosamine hydrolase from Shigella boydii serotype 18 (strain CDC 3083-94 / BS512).